A 386-amino-acid chain; its full sequence is Na(+)/H(+) antiporter NhaA (386 aa).

11 helical membrane-spanning segments follow: residues 11 to 31 (NDAT…FLAN), 60 to 80 (LLLW…GLEV), 96 to 116 (MFPL…YAAF), 126 to 146 (GWAI…ALLG), 155 to 175 (MFLM…IALF), 180 to 200 (LSLI…VLNG), 218 to 238 (VAVL…GLFI), 260 to 280 (VSWL…LSGV), 293 to 313 (ITLG…WLAV), 326 to 346 (LIDI…SIFI), and 358 to 378 (LVTL…LVGY).

It belongs to the NhaA Na(+)/H(+) (TC 2.A.33) antiporter family.

The protein resides in the cell inner membrane. The catalysed reaction is Na(+)(in) + 2 H(+)(out) = Na(+)(out) + 2 H(+)(in). Na(+)/H(+) antiporter that extrudes sodium in exchange for external protons. This is Na(+)/H(+) antiporter NhaA from Erwinia tasmaniensis (strain DSM 17950 / CFBP 7177 / CIP 109463 / NCPPB 4357 / Et1/99).